A 184-amino-acid polypeptide reads, in one-letter code: Photosystem I assembly protein Ycf4 (184 aa).

2 helical membrane passes run Phe-22–Ser-42 and Ile-57–Ser-77.

The protein belongs to the Ycf4 family.

Its subcellular location is the plastid. It localises to the chloroplast thylakoid membrane. In terms of biological role, seems to be required for the assembly of the photosystem I complex. This Coffea arabica (Arabian coffee) protein is Photosystem I assembly protein Ycf4.